Here is a 226-residue protein sequence, read N- to C-terminus: Uracil-DNA glycosylase (226 aa).

Catalysis depends on D64, which acts as the Proton acceptor.

Belongs to the uracil-DNA glycosylase (UDG) superfamily. UNG family.

It localises to the cytoplasm. It catalyses the reaction Hydrolyzes single-stranded DNA or mismatched double-stranded DNA and polynucleotides, releasing free uracil.. In terms of biological role, excises uracil residues from the DNA which can arise as a result of misincorporation of dUMP residues by DNA polymerase or due to deamination of cytosine. This is Uracil-DNA glycosylase from Fusobacterium nucleatum subsp. nucleatum (strain ATCC 25586 / DSM 15643 / BCRC 10681 / CIP 101130 / JCM 8532 / KCTC 2640 / LMG 13131 / VPI 4355).